The chain runs to 224 residues: Twisted gastrulation protein homolog 1 (224 aa).

The signal sequence occupies residues 1–26; sequence MRSPCAALSASLLLLLLLLWARSSVG. N-linked (GlcNAc...) asparagine glycans are attached at residues Asn53, Asn82, and Asn148.

The protein belongs to the twisted gastrulation protein family. In terms of assembly, interacts with CHRD and BMP4. This interaction enhances CHRD/BMP4 complex formation. Interacts with BMP7.

Its subcellular location is the secreted. Functionally, may be involved in dorsoventral axis formation. Seems to antagonize BMP signaling by forming ternary complexes with CHRD and BMPs, thereby preventing BMPs from binding to their receptors. In addition to the anti-BMP function, also has pro-BMP activity, partly mediated by cleavage and degradation of CHRD, which releases BMPs from ternary complexes. May be an important modulator of BMP-regulated cartilage development and chondrocyte differentiation. May play a role in thymocyte development. This Gallus gallus (Chicken) protein is Twisted gastrulation protein homolog 1 (TWSG1).